The following is a 396-amino-acid chain: Deoxyguanosinetriphosphate triphosphohydrolase-like protein (396 aa).

Residues 69–211 (RLSHSLEVSQ…AALADDIAYN (143 aa)) enclose the HD domain.

This sequence belongs to the dGTPase family. Type 2 subfamily.

The sequence is that of Deoxyguanosinetriphosphate triphosphohydrolase-like protein from Parvibaculum lavamentivorans (strain DS-1 / DSM 13023 / NCIMB 13966).